The chain runs to 375 residues: Phosphate acyltransferase (375 aa).

The tract at residues 354-375 (AQDDATSADADAPGDSETGSTN) is disordered. The segment covering 356-368 (DDATSADADAPGD) has biased composition (low complexity).

The protein belongs to the PlsX family. As to quaternary structure, homodimer. Probably interacts with PlsY.

It is found in the cytoplasm. The enzyme catalyses a fatty acyl-[ACP] + phosphate = an acyl phosphate + holo-[ACP]. It functions in the pathway lipid metabolism; phospholipid metabolism. In terms of biological role, catalyzes the reversible formation of acyl-phosphate (acyl-PO(4)) from acyl-[acyl-carrier-protein] (acyl-ACP). This enzyme utilizes acyl-ACP as fatty acyl donor, but not acyl-CoA. This chain is Phosphate acyltransferase, found in Ruegeria sp. (strain TM1040) (Silicibacter sp.).